Consider the following 1076-residue polypeptide: Ribosome quality control complex subunit NEMF (1076 aa).

Thr7 is subject to Phosphothreonine. The stretch at 296-359 (VDEFYSKIEG…LIEMNLQIVD (64 aa)) forms a coiled coil. Ser417 is modified (phosphoserine). The interval 420–453 (EDDDVDGDVNVEKNETEPPKGKKKKQKNKQLQKP) is disordered. The span at 429 to 439 (NVEKNETEPPK) shows a compositional bias: basic and acidic residues. Residues 440-449 (GKKKKQKNKQ) are compositionally biased toward basic residues. Positions 483–514 (AAKKTQKTVEAAEKAFKSAEKKTKQTLKEVQT) form a coiled coil. Acidic residues-rich tracts occupy residues 691 to 710 (ISEE…EDKE) and 742 to 754 (LIQE…EGEY). Disordered stretches follow at residues 691–715 (ISEE…HETP) and 742–972 (LIQE…DLDQ). Phosphoserine is present on residues Ser747, Ser748, and Ser763. The segment covering 755–768 (EEVRKDQDSVGEMK) has biased composition (basic and acidic residues). A compositionally biased stretch (polar residues) spans 777 to 795 (YPDTTIDLSHLQPQRSIQK). Phosphoserine is present on Ser831. Basic and acidic residues predominate over residues 839–854 (LEGKDKEKESTVHIET). Residues 869-894 (KRGQKSKMKKMKEKYKDQDEEDRELI) are a coiled coil. Residues 870 to 881 (RGQKSKMKKMKE) are compositionally biased toward basic residues. A compositionally biased stretch (basic and acidic residues) spans 937–965 (DNIKKETPFLEVITHELQDFAVDDPHDDK).

It belongs to the NEMF family. As to quaternary structure, component of the ribosome quality control complex (RQC), composed of the E3 ubiquitin ligase LTN1, TCF25 and NEMF associated with the 60S ribosomal subunit. The complex probably also contains VCP/p97 and its ubiquitin-binding cofactors. Interacts (via its N-terminus) with XPO1. As to expression, expressed in brain, heart, liver, lung, spleen, and skeletal muscle. Also expressed at lower levels in stomach and testis.

It is found in the cytoplasm. Its subcellular location is the cytosol. The protein resides in the nucleus. In terms of biological role, key component of the ribosome quality control complex (RQC), a ribosome-associated complex that mediates the extraction of incompletely synthesized nascent chains from stalled ribosomes as well as their ubiquitin-mediated proteasomal degradation. Thereby, frees 60S subunit ribosomes from the stalled translation complex and prevents the accumulation of nascent polypeptide chains that are potentially toxic for the cell. Within the RQC complex, NEMF specifically binds stalled 60S ribosomal subunits by recognizing an exposed, nascent chain-conjugated tRNA moiety and promotes the recruitment of LTN1 to stalled 60S subunits. Following binding to stalled 60S ribosomal subunits, NEMF mediates CAT tailing by recruiting alanine-charged tRNA to the A-site and directing the elongation of stalled nascent chains independently of mRNA or 40S subunits, leading to non-templated C-terminal alanine extensions (CAT tails). Mainly recruits alanine-charged tRNAs, but can also other amino acid-charged tRNAs. CAT tailing is required to promote ubiquitination of stalled nascent chains by different E3 ubiquitin-protein ligases. In the canonical RQC pathway (RQC-L), CAT tailing facilitates LTN1-dependent ubiquitination by exposing lysine residues that would otherwise remain buried in the ribosomal exit tunnel. In the alternative RQC pathway (RQC-C) CAT tailing creates an C-degron mainly composed of alanine that is recognized by the CRL2(KLHDC10) and RCHY1/PIRH2 E3 ligases, leading to ubiquitination and degradation of stalled nascent chains. NEMF may also indirectly play a role in nuclear export. This is Ribosome quality control complex subunit NEMF from Homo sapiens (Human).